Reading from the N-terminus, the 249-residue chain is 2,3-bisphosphoglycerate-dependent phosphoglycerate mutase (249 aa).

Substrate contacts are provided by residues 8–15 (RHGESQWN), 21–22 (TG), arginine 60, 87–90 (ERHY), lysine 98, 114–115 (RR), and 183–184 (GN). Histidine 9 functions as the Tele-phosphohistidine intermediate in the catalytic mechanism. Glutamate 87 serves as the catalytic Proton donor/acceptor.

This sequence belongs to the phosphoglycerate mutase family. BPG-dependent PGAM subfamily.

The enzyme catalyses (2R)-2-phosphoglycerate = (2R)-3-phosphoglycerate. It functions in the pathway carbohydrate degradation; glycolysis; pyruvate from D-glyceraldehyde 3-phosphate: step 3/5. Functionally, catalyzes the interconversion of 2-phosphoglycerate and 3-phosphoglycerate. In Pelodictyon phaeoclathratiforme (strain DSM 5477 / BU-1), this protein is 2,3-bisphosphoglycerate-dependent phosphoglycerate mutase.